A 347-amino-acid polypeptide reads, in one-letter code: NADH-ubiquinone oxidoreductase chain 2 (347 aa).

11 helical membrane passes run 1–21, 25–45, 59–79, 96–116, 122–142, 149–169, 178–198, 200–220, 237–257, 274–294, and 325–345; these read MNPLILIILLTTLILGTMMVV, HWLLAWIGFEMNMMAFIPIMM, YLLTQATASALLMMAVIINLM, TLMTVALAIKLGLAPFHFWVP, IPLTTGLILLTWQKLAPLSIL, INLHLMLIMSLLSILMGGWGG, IMAYSSIAHMGWMTAILLYNP, LTLLNLLIYITMTFTMFMLFI, MPVITTLTMLTLLSMGGLPPL, DMLIVPTFMAITALLNLYFYM, and LLPTAIVISTMLLPLTPMLSI.

It belongs to the complex I subunit 2 family. In terms of assembly, core subunit of respiratory chain NADH dehydrogenase (Complex I) which is composed of 45 different subunits. Interacts with TMEM242.

It localises to the mitochondrion inner membrane. The catalysed reaction is a ubiquinone + NADH + 5 H(+)(in) = a ubiquinol + NAD(+) + 4 H(+)(out). Its function is as follows. Core subunit of the mitochondrial membrane respiratory chain NADH dehydrogenase (Complex I) which catalyzes electron transfer from NADH through the respiratory chain, using ubiquinone as an electron acceptor. Essential for the catalytic activity and assembly of complex I. This chain is NADH-ubiquinone oxidoreductase chain 2, found in Balaenoptera physalus (Fin whale).